A 188-amino-acid chain; its full sequence is Calcium load-activated calcium channel (188 aa).

At 1-4 (MSTM) the chain is on the lumenal side. A helical transmembrane segment spans residues 5–32 (FADTILIVFISICTALLAEGITWVLVYR). The stretch at 32–89 (RTDKYKRLKAEVEKQSKKLEKKKETITESAGRQQKKKIERQEEKLKNNNRDLSMVRMK) forms a coiled coil. Over 33–86 (TDKYKRLKAEVEKQSKKLEKKKETITESAGRQQKKKIERQEEKLKNNNRDLSMV) the chain is Cytoplasmic. A helical membrane pass occupies residues 87–106 (RMKSMFAIGFCFTALMGMFN). Topologically, residues 107–120 (SIFDGRVVAKLPFV) are lumenal. The stretch at 121–130 (PLSYIQGLSH) is an intramembrane region. At 131 to 140 (RNLLGEDYTD) the chain is on the lumenal side. A helical transmembrane segment spans residues 141–162 (CSFIFLYILCTMSIRQNIQKML). Residues 163–188 (GLAPSRAATKQAGGFLGPPPQAAKFS) are Cytoplasmic-facing.

Belongs to the TMCO1 family. As to quaternary structure, homodimer and homotetramer. Component of the multi-pass translocon (MPT) complex.

The protein resides in the endoplasmic reticulum membrane. It localises to the golgi apparatus membrane. Its function is as follows. Calcium-selective channel required to prevent calcium stores from overfilling, thereby playing a key role in calcium homeostasis. In response to endoplasmic reticulum (ER) overloading, assembles into a homotetramer, forming a functional calcium-selective channel, regulating the calcium content in endoplasmic reticulum store. Component of the multi-pass translocon (MPT) complex that mediates insertion of multi-pass membrane proteins into the lipid bilayer of membranes. The sequence is that of Calcium load-activated calcium channel from Danio rerio (Zebrafish).